We begin with the raw amino-acid sequence, 99 residues long: Aspartyl/glutamyl-tRNA(Asn/Gln) amidotransferase subunit C (99 aa).

This sequence belongs to the GatC family. As to quaternary structure, heterotrimer of A, B and C subunits.

The catalysed reaction is L-glutamyl-tRNA(Gln) + L-glutamine + ATP + H2O = L-glutaminyl-tRNA(Gln) + L-glutamate + ADP + phosphate + H(+). The enzyme catalyses L-aspartyl-tRNA(Asn) + L-glutamine + ATP + H2O = L-asparaginyl-tRNA(Asn) + L-glutamate + ADP + phosphate + 2 H(+). In terms of biological role, allows the formation of correctly charged Asn-tRNA(Asn) or Gln-tRNA(Gln) through the transamidation of misacylated Asp-tRNA(Asn) or Glu-tRNA(Gln) in organisms which lack either or both of asparaginyl-tRNA or glutaminyl-tRNA synthetases. The reaction takes place in the presence of glutamine and ATP through an activated phospho-Asp-tRNA(Asn) or phospho-Glu-tRNA(Gln). The sequence is that of Aspartyl/glutamyl-tRNA(Asn/Gln) amidotransferase subunit C from Burkholderia lata (strain ATCC 17760 / DSM 23089 / LMG 22485 / NCIMB 9086 / R18194 / 383).